Consider the following 362-residue polypeptide: Probable tocopherol O-methyltransferase, chloroplastic (362 aa).

A chloroplast-targeting transit peptide spans 1–55 (MAHAAAATGALAPLHPLLRCTSRHLCASASPRAGLCLHHHRRRRRSSRRTKLAVR). The interval 141–150 (VVDVGCGIGG) is SAM motif I. The SAM motif II stretch occupies residues 204-212 (GQFDLVWSM). Residues 231–240 (VAAPGARIII) are SAM motif III.

It belongs to the class I-like SAM-binding methyltransferase superfamily. gTMT family.

The protein localises to the plastid. It localises to the chloroplast. The enzyme catalyses gamma-tocopherol + S-adenosyl-L-methionine = (+)-alpha-tocopherol + S-adenosyl-L-homocysteine + H(+). The catalysed reaction is delta-tocotrienol + S-adenosyl-L-methionine = beta-tocotrienol + S-adenosyl-L-homocysteine + H(+). It carries out the reaction gamma-tocotrienol + S-adenosyl-L-methionine = alpha-tocotrienol + S-adenosyl-L-homocysteine + H(+). It catalyses the reaction delta-tocopherol + S-adenosyl-L-methionine = beta-tocopherol + S-adenosyl-L-homocysteine + H(+). It participates in cofactor biosynthesis; tocopherol biosynthesis. In terms of biological role, involved in the synthesis of tocopherol (vitamin E). Methylates gamma- and delta-tocopherol to form beta- and alpha-tocopherol, respectively. In Oryza sativa subsp. japonica (Rice), this protein is Probable tocopherol O-methyltransferase, chloroplastic (VTE4).